Here is a 691-residue protein sequence, read N- to C-terminus: Replication and transcription activator (691 aa).

Threonine 366 and threonine 367 each carry an O-linked (GlcNAc) threonine; by host glycan. 2 disordered regions span residues 482-582 (EASG…SLPP) and 626-677 (LDTP…QESG). Over residues 504–513 (TAAATAAEAT) the composition is skewed to low complexity. Over residues 515–531 (PKRKQRSKERSSKKRKA) the composition is skewed to basic residues. Low complexity predominate over residues 539–556 (TTPSTTTPGTSLGSITTP). Over residues 655–677 (EYTQLQPVRATSATPANEVQESG) the composition is skewed to polar residues.

It belongs to the herpesviridae TAF50 family. Homotetramer. Interacts with KTA/ORF57. Interacts with host PARP1; this interaction negatively regulates RTA/ORF50 transactivation activity. Interacts with host SMC5 and SMC6; these interactions remove the repressive chromatin structure to allow viral reactivation. Interacts with host POU2F1; this interaction enhances RTA/ORF50-mediated transactivation of several viral promoters including K-bZIP promoter.

The protein localises to the host nucleus. The enzyme catalyses S-ubiquitinyl-[E2 ubiquitin-conjugating enzyme]-L-cysteine + [acceptor protein]-L-lysine = [E2 ubiquitin-conjugating enzyme]-L-cysteine + N(6)-ubiquitinyl-[acceptor protein]-L-lysine.. Its function is as follows. Transcriptional transactivator that is necessary and sufficient for reactivation of the virus from latency. Acts post-transcriptionally and transcriptionally to regulate viral lytic gene expression and synergistically with ORF57 activates certain early and late viral promoters including its own promoter. Autostimulation on its promoter is mediated by the formation of a ternary complex between ORF50 and the cellular components HGMB1 and POU2F1. Also possesses a bimodal activity in targeting proteins for degradation through using its own E3 ligase activity or by stabilizing and chaperoning host E3 ligases. These activities help to subvert the host innate and adaptive immune responses while also modulating the host transcriptome and protein landscape to promote virus production. For instance, targets the host SMC5/6 complex for ubiquitination and subsequent degradation through the ubiquitin-proteasome during reactivation while during latency, host SMC5/6 complex binds to the viral episome and condenses viral chromatin, creating a repressive chromatin structure to silence genome transcription. Hijacks the cellular E3 ligase complex RNF20/40 to increase the level of transcriptionally active RNA polymerase II on viral gene promoters thereby facilitating lytic gene expression. Acts as a SUMO-targeting ubiquitin ligase and affects general sumoylation of cellular proteins. Promotes the polyubiquitination and subsequent degradation of host MYD88 and thereby inhibits MYD88-mediated TLR4 signaling. Induces the degradation of vFLIP/ORF71 together with cellular ubiquitin ligase ITCH to prevent vFLIP-induced NF-kappa-B signaling. This Homo sapiens (Human) protein is Replication and transcription activator (ORF50).